The following is a 782-amino-acid chain: Coiled-coil alpha-helical rod protein 1 (782 aa).

Basic and acidic residues-rich tracts occupy residues 62–74 (ERDVSSDRQEPGR) and 208–218 (ETRRAGEAKEL). Disordered stretches follow at residues 62–82 (ERDVSSDRQEPGRRGRSWGLE) and 182–218 (LTQAHEEALSSLTSKAEGLEKSLSSLETRRAGEAKEL). Coiled-coil stretches lie at residues 82–314 (EGSQ…ELTR), 344–437 (LMVQ…NAVS), and 498–691 (VADV…QQEG).

The protein resides in the cytoplasm. Its subcellular location is the nucleus. In terms of biological role, may be a regulator of keratinocyte proliferation or differentiation. In Pan paniscus (Pygmy chimpanzee), this protein is Coiled-coil alpha-helical rod protein 1 (CCHCR1).